The sequence spans 355 residues: Probable nitronate monooxygenase (355 aa).

FMN is bound by residues Asn-71, Gln-175, Gly-180, Gly-218, and 237–240 (QMGT).

This sequence belongs to the nitronate monooxygenase family. NMO class I subfamily. The cofactor is FMN.

It catalyses the reaction 3 propionate 3-nitronate + 3 O2 + H2O = 3 3-oxopropanoate + 2 nitrate + nitrite + H2O2 + 3 H(+). In terms of biological role, nitronate monooxygenase that uses molecular oxygen to catalyze the oxidative denitrification of alkyl nitronates. Acts on propionate 3-nitronate (P3N), the presumed physiological substrate. Probably functions in the detoxification of P3N, a metabolic poison produced by plants and fungi as a defense mechanism. In Staphylococcus aureus (strain USA300), this protein is Probable nitronate monooxygenase.